The primary structure comprises 216 residues: Peptide methionine sulfoxide reductase MsrA (216 aa).

The active site involves cysteine 58.

It belongs to the MsrA Met sulfoxide reductase family.

The enzyme catalyses L-methionyl-[protein] + [thioredoxin]-disulfide + H2O = L-methionyl-(S)-S-oxide-[protein] + [thioredoxin]-dithiol. The catalysed reaction is [thioredoxin]-disulfide + L-methionine + H2O = L-methionine (S)-S-oxide + [thioredoxin]-dithiol. In terms of biological role, has an important function as a repair enzyme for proteins that have been inactivated by oxidation. Catalyzes the reversible oxidation-reduction of methionine sulfoxide in proteins to methionine. The polypeptide is Peptide methionine sulfoxide reductase MsrA (Azotobacter vinelandii (strain DJ / ATCC BAA-1303)).